We begin with the raw amino-acid sequence, 599 residues long: Sulfite reductase [NADPH] flavoprotein alpha-component (599 aa).

In terms of domain architecture, Flavodoxin-like spans 64-202 (ITIISASQTG…AASEWRARVV (139 aa)). FMN contacts are provided by residues 70-75 (SQTGNA), 117-120 (STQG), and 153-162 (LGDSSYEFFC). Positions 234-448 (DAPLVASLSV…IEHNDNFRLP (215 aa)) constitute an FAD-binding FR-type domain. Residues threonine 322, alanine 356, 386–389 (RLYS), 404–406 (TVG), tyrosine 410, and 419–422 (GGAS) contribute to the FAD site. NADP(+) is bound by residues 519 to 520 (SR), 525 to 529 (KVYVQ), and aspartate 561. Tyrosine 599 contacts FAD.

It belongs to the NADPH-dependent sulphite reductase flavoprotein subunit CysJ family. The protein in the N-terminal section; belongs to the flavodoxin family. This sequence in the C-terminal section; belongs to the flavoprotein pyridine nucleotide cytochrome reductase family. In terms of assembly, alpha(8)-beta(8). The alpha component is a flavoprotein, the beta component is a hemoprotein. Requires FAD as cofactor. It depends on FMN as a cofactor.

It carries out the reaction hydrogen sulfide + 3 NADP(+) + 3 H2O = sulfite + 3 NADPH + 4 H(+). It participates in sulfur metabolism; hydrogen sulfide biosynthesis; hydrogen sulfide from sulfite (NADPH route): step 1/1. Component of the sulfite reductase complex that catalyzes the 6-electron reduction of sulfite to sulfide. This is one of several activities required for the biosynthesis of L-cysteine from sulfate. The flavoprotein component catalyzes the electron flow from NADPH -&gt; FAD -&gt; FMN to the hemoprotein component. The sequence is that of Sulfite reductase [NADPH] flavoprotein alpha-component from Shigella dysenteriae serotype 1 (strain Sd197).